We begin with the raw amino-acid sequence, 165 residues long: Ubiquitin-conjugating enzyme E2 G2 (165 aa).

Ala-2 carries the post-translational modification N-acetylalanine. Residues 4-164 (TALKRLMAEY…AKQIVQKSLG (161 aa)) enclose the UBC core domain. The active-site Glycyl thioester intermediate is the Cys-89.

It belongs to the ubiquitin-conjugating enzyme family. Interacts with AUP1 (via C-terminus); the interaction recruits UBE2G2 to lipid droplets. Interacts with ubiquitin ligases AMFR/gp78 and RNF139/TRC8; recruitment to lipid droplets by AUP1 facilitates interaction of UBE2G2 with AMFR and RNF139, leading to sterol-induced ubiquitination of 3-hydroxy-3-methylglutaryl coenzyme A reductase and its subsequent proteasomal degradation.

It is found in the endoplasmic reticulum. The protein localises to the lipid droplet. The enzyme catalyses S-ubiquitinyl-[E1 ubiquitin-activating enzyme]-L-cysteine + [E2 ubiquitin-conjugating enzyme]-L-cysteine = [E1 ubiquitin-activating enzyme]-L-cysteine + S-ubiquitinyl-[E2 ubiquitin-conjugating enzyme]-L-cysteine.. The protein operates within protein modification; protein ubiquitination. Its function is as follows. Accepts ubiquitin from the E1 complex and catalyzes its covalent attachment to other proteins. In vitro catalyzes 'Lys-48'-linked polyubiquitination. Involved in endoplasmic reticulum-associated degradation (ERAD). Required for sterol-induced ubiquitination of 3-hydroxy-3-methylglutaryl coenzyme A reductase and its subsequent proteasomal degradation. The chain is Ubiquitin-conjugating enzyme E2 G2 from Bos taurus (Bovine).